The sequence spans 412 residues: 46 kDa FK506-binding nuclear protein (412 aa).

3 stretches are compositionally biased toward acidic residues: residues 95–113, 169–178, and 188–216; these read EEDL…EEEA, GEDIDTDEND, and EGDD…EEEE. Positions 95-304 are disordered; the sequence is EEDLEDEEEA…PVEKKEKKQI (210 aa). Residues 247–257 show a composition bias toward basic residues; it reads KSQKRRLKKKL. Residues 271-303 show a composition bias toward basic and acidic residues; it reads DKPKKEEPQQKAEKKKPEAKKEEAPVEKKEKKQ. The region spanning 324–412 is the PPIase FKBP-type domain; that stretch reads GKVVMVYYEG…VFEVDLKNVK (89 aa).

Belongs to the FKBP-type PPIase family. Post-translationally, phosphorylated by a nuclear kinase in the presence of Mg(2+) and ATP.

The protein localises to the nucleus. The catalysed reaction is [protein]-peptidylproline (omega=180) = [protein]-peptidylproline (omega=0). Its activity is regulated as follows. Inhibited by both FK506 and rapamycin. PPIases accelerate the folding of proteins. It catalyzes the cis-trans isomerization of proline imidic peptide bonds in oligopeptides. Binds double-stranded DNA in vitro. The protein is 46 kDa FK506-binding nuclear protein (FKBP46) of Spodoptera frugiperda (Fall armyworm).